A 145-amino-acid polypeptide reads, in one-letter code: MTQTIFVLNGPNLNMLGKREPGIYGGKTLKDIEADCKVAGRELGFDIDFRQSNHEGTLVDWFHEADEKAVGVAFNAGAYTHTSVALHDAIRAISIPVVELHISNVHAREEFRHKSMIAPACKGVICGFGPHSYILALHALKNITA.

The active-site Proton acceptor is Y24. 3 residues coordinate substrate: N75, H81, and D88. Residue H101 is the Proton donor of the active site. Substrate is bound by residues I102–S103 and R112.

Belongs to the type-II 3-dehydroquinase family. Homododecamer.

It catalyses the reaction 3-dehydroquinate = 3-dehydroshikimate + H2O. It participates in metabolic intermediate biosynthesis; chorismate biosynthesis; chorismate from D-erythrose 4-phosphate and phosphoenolpyruvate: step 3/7. Its function is as follows. Catalyzes a trans-dehydration via an enolate intermediate. The sequence is that of 3-dehydroquinate dehydratase from Rhizobium etli (strain CIAT 652).